The following is a 138-amino-acid chain: Basic phospholipase A2 BP-II (138 aa).

The signal sequence occupies residues 1 to 16 (MRTLWIMAVLLVGVDG). Intrachain disulfides connect cysteine 42/cysteine 132, cysteine 44/cysteine 60, cysteine 59/cysteine 112, cysteine 65/cysteine 138, cysteine 66/cysteine 105, cysteine 73/cysteine 98, and cysteine 91/cysteine 103. Ca(2+) contacts are provided by glycine 45 and glycine 47. The active site involves histidine 63. Aspartate 106 is an active-site residue.

It belongs to the phospholipase A2 family. Group II subfamily. K49 sub-subfamily. Exists as a monomer in both solution and crystal states. In the presence of SDS or probably in the presence of phospholipids, assembles to form SDS-resistant stable oligomers. The cofactor is Ca(2+). As to expression, expressed by the venom gland.

It is found in the secreted. The enzyme catalyses a 1,2-diacyl-sn-glycero-3-phosphocholine + H2O = a 1-acyl-sn-glycero-3-phosphocholine + a fatty acid + H(+). Functionally, snake venom phospholipase A2 (PLA2) that shows anticoagulant activities, strong myolytic activity, infiltration of polymorphonuclear cells, and edema in stromal tissues. Induces cell death of Jurkat cells in a concentration-dependent manner. Shows a low phospholipase A2 activity. PLA2 catalyzes the calcium-dependent hydrolysis of the 2-acyl groups in 3-sn-phosphoglycerides. The chain is Basic phospholipase A2 BP-II from Protobothrops flavoviridis (Habu).